We begin with the raw amino-acid sequence, 328 residues long: NAD(P)H-dependent pentose reductase (328 aa).

Tyr50 serves as the catalytic Proton donor. His112 serves as a coordination point for substrate. Residues 174-175 (AN), 223-232 (SSFGPQSFVE), and 279-289 (KSNNVDRLKQN) each bind NAD(+).

The protein belongs to the aldo/keto reductase family.

In terms of biological role, pentose reductase with a broad substrate affinity involved in pentose catabolism. Has highest reductase activities with L-arabinose and D-xylose as substrates, and displays much lower activities with D-ribose, D-galactose and D-glucose. Has highest dehydrogenase activity with L-arabitol as substrate, followed by xylitol and D-sorbitol. May be responsible for the first step of the L-arabinose catabolic pathway. In Pyricularia oryzae (strain 70-15 / ATCC MYA-4617 / FGSC 8958) (Rice blast fungus), this protein is NAD(P)H-dependent pentose reductase (PRD1).